The primary structure comprises 477 residues: Mannitol 2-dehydrogenase (477 aa).

19–30 (IVHIGVGNFHRA) contacts NAD(+).

This sequence belongs to the mannitol dehydrogenase family. In terms of assembly, monomer.

It carries out the reaction D-mannitol + NAD(+) = D-fructose + NADH + H(+). This Cereibacter sphaeroides (Rhodobacter sphaeroides) protein is Mannitol 2-dehydrogenase (mtlK).